The chain runs to 121 residues: EFTLGQEINVDIFADVKKVDVTGTSKGKGFQGGVKRWNFRTQDATHGNSLSHRVLGSIGQNQTPGRVFKGKKMAGHLGNERVTVQSLEVVRVDAERKLLLVKGAVPGATGSDVIVKPAVKA.

Gln-62 bears the N5-methylglutamine mark.

The protein belongs to the universal ribosomal protein uL3 family. In terms of assembly, part of the 50S ribosomal subunit. Forms a cluster with proteins L14 and L19. In terms of processing, methylated by PrmB.

In terms of biological role, one of the primary rRNA binding proteins, it binds directly near the 3'-end of the 23S rRNA, where it nucleates assembly of the 50S subunit. This chain is Large ribosomal subunit protein uL3 (rplC), found in Aggregatibacter actinomycetemcomitans (Actinobacillus actinomycetemcomitans).